We begin with the raw amino-acid sequence, 212 residues long: Glycerol-3-phosphate acyltransferase (212 aa).

5 consecutive transmembrane segments (helical) span residues 3-23 (IIIMIIIAYLLGSIQTGLWIG), 70-90 (IPIILGITTVSPFFIGFFAII), 110-130 (AGVLLGFAPSFFLYLLVIFLL), 143-163 (ITVAVVGILSVLIFPLVGFIL), and 164-184 (TDYDWIFTTVVILMALTIIIR).

It belongs to the PlsY family. In terms of assembly, probably interacts with PlsX.

It localises to the cell membrane. The enzyme catalyses an acyl phosphate + sn-glycerol 3-phosphate = a 1-acyl-sn-glycero-3-phosphate + phosphate. The protein operates within lipid metabolism; phospholipid metabolism. Its function is as follows. Catalyzes the transfer of an acyl group from acyl-phosphate (acyl-PO(4)) to glycerol-3-phosphate (G3P) to form lysophosphatidic acid (LPA). This enzyme utilizes acyl-phosphate as fatty acyl donor, but not acyl-CoA or acyl-ACP. This is Glycerol-3-phosphate acyltransferase from Streptococcus agalactiae serotype III (strain NEM316).